We begin with the raw amino-acid sequence, 435 residues long: Nuclear receptor subfamily 6 group A member 1 (435 aa).

Positions 11-86 form a DNA-binding region, nuclear receptor; sequence QRACLICGDR…MGMNRKAIRE (76 aa). 2 NR C4-type zinc fingers span residues 14-34 and 50-69; these read CLIC…CEGC and CSRD…CQYC. The segment at 84-158 is disordered; the sequence is IREDGMPGGR…STPSSSRSME (75 aa). Residues 121-141 are compositionally biased toward polar residues; it reads NTSWSNNGDSDHSSPGNAVSE. The segment covering 142-156 has biased composition (low complexity); sequence SNQPSPVSTPSSSRS. The region spanning 204 to 435 is the NR LBD domain; the sequence is QSHTLINQLL…HSCKTIVTKE (232 aa).

This sequence belongs to the nuclear hormone receptor family. NR6 subfamily. Homodimer. In terms of tissue distribution, transiently expressed in differentiating cells of all embryonic germ layers. Expressed in an anterior to posterior concentration gradient from late gastrula to midneurula stages. Shows a complicated spatio-temporal pattern of expression during neurulation, being predominant in the neural plate and neural crest in midneurula embryos. At late tailbud (stage 30), mainly expressed in the head mesenchyme, gill arches and tail tip. Expression persists in the epidermis, somites and endoderm, and in the central nervous system, expression is restricted to the midbrain, hindbrain and part of the spinal cord. Isoforms Oo and Em are both expressed in the brain and isoform Oo is expressed in the germ cells of both the adult testis and ovary.

The protein resides in the cytoplasm. Its subcellular location is the nucleus. In terms of biological role, probable orphan nuclear receptor. Binds to a response element containing repeats of the motif 5'-AGGTCA-3'. Required for anterior-posterior patterning during organogenesis. Acts with chordin to play a role in patterning the midbrain-hindbrain. Isoform Em is required for integrin-mediated cell matrix interaction during neurulation and for the morphogenetic movements leading to formation of the neural tube. Also mediates the effect of retinoic acid on primary neurogenesis. The protein is Nuclear receptor subfamily 6 group A member 1 of Xenopus laevis (African clawed frog).